A 660-amino-acid chain; its full sequence is MKLPKPWWAGGGLLQLTILLSLVGLRVDLDLFLPPPAAALWEELLPLCPTRPASASNPFSASEGWERTPLLPAKGRLLHEVRALGVPFIPRTRVDAWLVHSVATGNADGAHGLLGTAASSAVGDGGQSASAGGGDPRAAHSSPLAAEEEEEKAAEPTAQVPDAGGCGSQENGMLREKSEAVDHSSQQEENEEGVSAQAKSRQQSKTEEHKMACASAREAEKITEARNESHLHWSDTSFSLEDLFQLLSSQPEHSLEGISVEDIPPFLSSVCESVNSSAQNINLSQAISHDVNLHEAMLLYPNNTFRRDPSARSSQAQEPFLQLNPHTNPEQATPAMSLPPFDNQMRNLTSQDLLYDLDSNIFDGINLMSLATGFSPLEVSQLFEEPDSGLSLNSSYNSTSLTNSYRIYDGTVGYNSDLQSLCHDLGAVGGCYPEPHKHCHMDHRTIAGFHVSLECQQVFHDHTYHLQSGASEPTSESFAWSEKSQKTSGCLDNPDRNLSRDEQRAKALHIPFSVDEIVRMPVDSFNSMLSRYYLTDLQVSLIRDIRRRGKNKVAAQNCRKRKLDIILNLEDDICNLQAKKEALKNEQTQCSKAIDIMRQKLHGLHQDVFNRLRDDQGRPVNPSQYALQYSHDGTVLIVPKELISSGHKKEAPKGKRERRN.

The tract at residues 120–214 (SAVGDGGQSA…KTEEHKMACA (95 aa)) is disordered. Residues 123-135 (GDGGQSASAGGGD) are compositionally biased toward gly residues. Basic and acidic residues-rich tracts occupy residues 173–186 (MLRE…HSSQ) and 204–214 (SKTEEHKMACA). The bZIP domain maps to 541–604 (LIRDIRRRGK…DIMRQKLHGL (64 aa)). The interval 543-562 (RDIRRRGKNKVAAQNCRKRK) is basic motif. The tract at residues 566–573 (ILNLEDDI) is leucine-zipper.

This sequence belongs to the bZIP family. CNC subfamily. As to quaternary structure, heterodimer with MAFG, MAFK and other small MAF proteins that binds to the MAF recognition elements (MARE). As to expression, high level expression in brain, thymus, testis and placenta. Medium level expression in uterus, stomach and lung. Low level expression in kidney. No expression in heart, liver, spleen and ovary.

The protein resides in the nucleus. Functionally, activates erythroid-specific, globin gene expression. In Mus musculus (Mouse), this protein is Nuclear factor erythroid 2-related factor 3 (Nfe2l3).